Consider the following 245-residue polypeptide: Lytic switch protein BZLF1 (245 aa).

A transactivation region spans residues 1-167 (MMDPNSTSED…RTRKPLQPES (167 aa)). T14 and T159 each carry phosphothreonine. The disordered stretch occupies residues 145–167 (GAPQPAPAAAPARRTRKPLQPES). Residues 157 to 194 (RRTRKPLQPESLEECDSELEIKRYKNRVASRKCRAKFK) carry the Bipartite nuclear localization signal motif. 3 positions are modified to phosphoserine: S167, S173, and S186. The segment at 178-195 (KRYKNRVASRKCRAKFKH) is basic motif. The region spanning 178–228 (KRYKNRVASRKCRAKFKHLLQHYREVASAKSSENDRLRLLLKQMCPSLDVD) is the bZIP domain. The segment at 196-228 (LLQHYREVASAKSSENDRLRLLLKQMCPSLDVD) is leucine-zipper. Residues 229-245 (SIIPRTPDVLHEDLLNF) are accessory activation domain.

Belongs to the bZIP family. As to quaternary structure, homodimer. Interacts (via b-ZIP domain) with the DNA polymerase processivity factor BMRF1 (via N-terminus); this interaction may inhibit BZLF1-induced transcription of the BMRF1 promoter. Interacts with human UBN1, CRTC2 and RACK1. Interacts (via N-terminus) with human PAX5 (via N-terminus); this interaction inhibits BZLF1-mediated lytic viral reactivation. Interacts (via leucine-zipper domain) with host CEBPA; this interaction induces G1 host cell cycle arrest. Interacts (via C-terminus) with host TP53BP1 (via C-terminus); this interaction is involved in the activation of the viral lytic cycle. Interacts with host chromatin-remodeling ATPase INO80; this interaction participates to the activation of early lytic viral genes by BZLF1. Interacts with host regulator of chromatin SMARCA5/hSNF2H; this interaction participates to the activation of early lytic viral genes by BZLF1. Interacts with host PLSCR1/Phospholipid scramblase 1; this interaction negatively regulates the transcriptional regulatory activity of BZLF1 by preventing the formation of the BZLF1-CBP complex.

The protein resides in the host nucleus. In terms of biological role, transcription factor that acts as a molecular switch to induce the transition from the latent to the lytic or productive phase of the virus cycle. Mediates the switch from the latent to the lytic cycle of infection in cells containing a highly methylated viral genome. Probably binds to silenced chromatin and recruits host chromatin-remodeling enzymes. Regulates this switch by binding to 2 types of ZEBRA response elements (ZREs): the CpG-free AP-1 like elements (latency) and the methylated CpG-containing elements (lytic replication). Activates preferentially the methylated forms of the viral lytic R (BRLF1) and Na (BRRF1) gene promoters, the latters being the first genes activated during Z-mediated reactivation in latently infected cells. BZLF1 and BRLF1 act together to trigger lytic replication. Also binds the lytic origin of replication, oriLyt. Induces G1 cell cycle arrest by stabilizing the host CCAAT/enhancer binding protein CEBPA. This function is important because the lytic cycle preferentially takes place in host cells arrested in G1. In Homo sapiens (Human), this protein is Lytic switch protein BZLF1.